We begin with the raw amino-acid sequence, 272 residues long: MTIVKCKPTSPARRHVIKVVNPELHKGKPFIPLLETISKSGGRNNNGHITTRHVGGGHKQRYRIIDFKRNKDNIAAKIERIEYDPNRSANIALVLYQDGERRYIIAPKGLKVGDQIISGHHATIKTGNTLPIQNIPLGSIVHNVEIKPGKGGQIARSAGASVQIIARDYKYVTLRLRSGEIRRIHSECRATLGEVGNAEHMLRVLGKAGANRWRSIRPTVRGTAMNPVDHPHGGGEGRNFGKHPVSPWGKKTKGKKTRNNRLTDKFIVHRRS.

The interval 222 to 272 (GTAMNPVDHPHGGGEGRNFGKHPVSPWGKKTKGKKTRNNRLTDKFIVHRRS) is disordered. Residues 250–259 (KKTKGKKTRN) are compositionally biased toward basic residues. Residues 261–272 (RLTDKFIVHRRS) are compositionally biased toward basic and acidic residues.

This sequence belongs to the universal ribosomal protein uL2 family. In terms of assembly, part of the 50S ribosomal subunit. Forms a bridge to the 30S subunit in the 70S ribosome.

Its function is as follows. One of the primary rRNA binding proteins. Required for association of the 30S and 50S subunits to form the 70S ribosome, for tRNA binding and peptide bond formation. It has been suggested to have peptidyltransferase activity; this is somewhat controversial. Makes several contacts with the 16S rRNA in the 70S ribosome. This is Large ribosomal subunit protein uL2 from Baumannia cicadellinicola subsp. Homalodisca coagulata.